We begin with the raw amino-acid sequence, 471 residues long: Fructokinase-like 1, chloroplastic (471 aa).

Residues 1–38 (MASLLIFPHLHHFDSSLDRREVLVVRHSQASRRFLTPK) constitute a chloroplast transit peptide. Positions 36–85 (TPKASINGSGITNGAAAETTSKPSRKGRKKKQTSTVIEKDNTETDPELNP) are disordered. Over residues 39 to 57 (ASINGSGITNGAAAETTSK) the composition is skewed to polar residues. Residues 58-67 (PSRKGRKKKQ) are compositionally biased toward basic residues.

The protein belongs to the carbohydrate kinase PfkB family. As to quaternary structure, interacts with CITRX/TRXz. Interacts with PTAC7. Self-interacts. Binds to FLN2. Associates with the plastid-encoded RNA polymerase (PEP) complex.

It is found in the plastid. The protein localises to the chloroplast. In terms of biological role, required for proper chloroplast development, most likely through regulating plastid-encoded polymerase (PEP) dependent chloroplast transcription. Acts as a component of the transcriptionally active plastid chromosome that is required for plastid gene expression. This chain is Fructokinase-like 1, chloroplastic, found in Arabidopsis thaliana (Mouse-ear cress).